A 428-amino-acid chain; its full sequence is Adenosylmethionine-8-amino-7-oxononanoate aminotransferase (428 aa).

Residue W52 participates in substrate binding. Pyridoxal 5'-phosphate is bound at residue 112–113 (GS). Y144 provides a ligand contact to substrate. Residue D245 coordinates pyridoxal 5'-phosphate. Residues K274 and G307 each coordinate substrate. Position 274 is an N6-(pyridoxal phosphate)lysine (K274). 308 to 309 (PT) lines the pyridoxal 5'-phosphate pocket. Position 391 (R391) interacts with substrate.

Belongs to the class-III pyridoxal-phosphate-dependent aminotransferase family. BioA subfamily. Homodimer. Pyridoxal 5'-phosphate is required as a cofactor.

It is found in the cytoplasm. The catalysed reaction is (8S)-8-amino-7-oxononanoate + S-adenosyl-L-methionine = S-adenosyl-4-methylsulfanyl-2-oxobutanoate + (7R,8S)-7,8-diammoniononanoate. Its pathway is cofactor biosynthesis; biotin biosynthesis; 7,8-diaminononanoate from 8-amino-7-oxononanoate (SAM route): step 1/1. In terms of biological role, catalyzes the transfer of the alpha-amino group from S-adenosyl-L-methionine (SAM) to 7-keto-8-aminopelargonic acid (KAPA) to form 7,8-diaminopelargonic acid (DAPA). It is the only aminotransferase known to utilize SAM as an amino donor. The chain is Adenosylmethionine-8-amino-7-oxononanoate aminotransferase from Buchnera aphidicola subsp. Acyrthosiphon pisum (strain APS) (Acyrthosiphon pisum symbiotic bacterium).